A 234-amino-acid chain; its full sequence is Ribosomal RNA small subunit methyltransferase G (234 aa).

S-adenosyl-L-methionine contacts are provided by residues G74, F79, 125-126 (AE), and R144.

The protein belongs to the methyltransferase superfamily. RNA methyltransferase RsmG family.

It is found in the cytoplasm. Specifically methylates the N7 position of a guanine in 16S rRNA. The chain is Ribosomal RNA small subunit methyltransferase G from Roseiflexus sp. (strain RS-1).